The sequence spans 625 residues: Grainyhead-like protein 2 homolog (625 aa).

The interval 1 to 93 (MSQESDNNKR…KASDSQEDQD (93 aa)) is transcription activation. Disordered regions lie at residues 198–222 (ASHS…SFKD) and 428–452 (EERK…SSDG). Residues 244-482 (GSGTFQYTLE…DLHSQPVLFI (239 aa)) form the Grh/CP2 DB domain. The span at 440 to 451 (QASQAQCNNSSD) shows a compositional bias: polar residues.

This sequence belongs to the grh/CP2 family. Grainyhead subfamily. As to quaternary structure, homodimer, also forms heterodimers with GRHL1 or GRHL3.

It is found in the nucleus. It localises to the membrane. In terms of biological role, transcription factor playing an important role in primary neurulation and in epithelial development. Binds directly to the consensus DNA sequence 5'-AACCGGTT-3' acting as an activator and repressor on distinct target genes. During embryogenesis, plays unique and cooperative roles with GRHL3 in establishing distinct zones of primary neurulation. Essential for closure 3 (rostral end of the forebrain), functions cooperatively with GRHL3 in closure 2 (forebrain/midbrain boundary) and posterior neuropore closure. Regulates epithelial morphogenesis acting as a target gene-associated transcriptional activator of apical junctional complex components. Up-regulates of CLDN3 and CLDN4, as well as of RAB25, which increases the CLDN4 protein and its localization at tight junctions. Comprises an essential component of the transcriptional machinery that establishes appropriate expression levels of CLDN4 and CDH1 in different types of epithelia. Exhibits functional redundancy with GRHL3 in epidermal morphogenetic events such as eyelid fusion and epidermal wound repair. In lung, forms a regulatory loop with NKX2-1 that coordinates lung epithelial cell morphogenesis and differentiation. In keratinocytes, plays a role in telomerase activation during cellular proliferation, regulates TERT expression by binding to TERT promoter region and inhibiting DNA methylation at the 5'-CpG island, possibly by interfering with DNMT1 enzyme activity. In addition, impairs keratinocyte differentiation and epidermal function by inhibiting the expression of genes clustered at the epidermal differentiation complex (EDC) as well as GRHL1 and GRHL3 through epigenetic mechanisms. The chain is Grainyhead-like protein 2 homolog (Grhl2) from Mus musculus (Mouse).